The primary structure comprises 452 residues: Chromosomal replication initiator protein DnaA (452 aa).

The interval 1 to 73 (MSPNSTLWQT…NELATKYSST (73 aa)) is domain I, interacts with DnaA modulators. Residues 73–102 (TPVRLKFVSQEEVIEEPVADRKLTIDYRQG) form a domain II region. Positions 103 to 323 (NLNSTYTFDS…GALIRLISYA (221 aa)) are domain III, AAA+ region. The ATP site is built by G147, G149, K150, and T151. A domain IV, binds dsDNA region spans residues 324 to 452 (QTFNLEITMN…VKKIDSPLLK (129 aa)).

Belongs to the DnaA family. Oligomerizes as a right-handed, spiral filament on DNA at oriC.

It is found in the cytoplasm. Its function is as follows. Plays an essential role in the initiation and regulation of chromosomal replication. ATP-DnaA binds to the origin of replication (oriC) to initiate formation of the DNA replication initiation complex once per cell cycle. Binds the DnaA box (a 9 base pair repeat at the origin) and separates the double-stranded (ds)DNA. Forms a right-handed helical filament on oriC DNA; dsDNA binds to the exterior of the filament while single-stranded (ss)DNA is stabiized in the filament's interior. The ATP-DnaA-oriC complex binds and stabilizes one strand of the AT-rich DNA unwinding element (DUE), permitting loading of DNA polymerase. After initiation quickly degrades to an ADP-DnaA complex that is not apt for DNA replication. Binds acidic phospholipids. In Acholeplasma laidlawii (strain PG-8A), this protein is Chromosomal replication initiator protein DnaA.